Here is a 174-residue protein sequence, read N- to C-terminus: MRFLIAFVAILGYASASAIYPLAYGVNAGDAQAAAIDAAVAAQDHARAANEGQARAVEAAVQYNTDATRQVAEANRDLHETAYWNGVAATQNAVAAAQSQVAAANGAAAAVRAAHESGAYVTPYVAPYAGSYVNPYAASLVTPYGYGINGLGAVGSWCLRSRRLPCRCPRLVNT.

Positions 1–18 are cleaved as a signal peptide; that stretch reads MRFLIAFVAILGYASASA.

The protein resides in the secreted. This is Cuticle protein 1 from Lonomia obliqua (Moth).